The sequence spans 119 residues: Large ribosomal subunit protein bL20 (119 aa).

The protein belongs to the bacterial ribosomal protein bL20 family.

Functionally, binds directly to 23S ribosomal RNA and is necessary for the in vitro assembly process of the 50S ribosomal subunit. It is not involved in the protein synthesizing functions of that subunit. The protein is Large ribosomal subunit protein bL20 of Laribacter hongkongensis (strain HLHK9).